The following is a 357-amino-acid chain: Hydroxyproline O-arabinosyltransferase RDN1 (357 aa).

The chain crosses the membrane as a helical; Signal-anchor span at residues 13–33 (LLMLLMVLGFSFATYNLVFMM).

In terms of tissue distribution, expressed in the vasculature of leaves, petioles, stems and roots. Expressed in the vascular cylinder throughout the root, and nodule vasculature.

It localises to the golgi apparatus membrane. It catalyses the reaction trans-4-hydroxy-L-prolyl-[protein] + UDP-beta-L-arabinofuranose = O-(beta-L-arabinofuranosyl)-trans-4-hydroxy-L-prolyl-[protein] + UDP + H(+). Probable glycosyltransferase involved in the O-arabinosylation of several proteins including extensins and small signaling peptides. Catalyzes the transfer of the initial L-arabinose to the hydroxyl group of Hyp residues. Probably involved in the arabinosylation of CLE12, a signaling peptide that moves from root to shoot, to interact with SUNN receptor kinase signaling that regulates nodulation. Involved in long distance nodulation signaling events. Involved in the autoregulation of nodulation (AON), a long distance systemic signaling from root to shoot and back again, which allows legumes to limit the number of root nodules formed based on available nitrogen and previous rhizobial colonization. Functions in the root, upstream of the shoot receptor kinase SUNN and via CLE peptide, to control AON. The sequence is that of Hydroxyproline O-arabinosyltransferase RDN1 from Medicago truncatula (Barrel medic).